A 1055-amino-acid chain; its full sequence is SMC5-SMC6 complex localization factor protein 1 (1055 aa).

BRCT domains lie at 2-80 (EDDA…AQSG) and 121-199 (PGAF…LLEK). The disordered stretch occupies residues 312 to 332 (KKRKKEKERDSRKDIEHDRST). Residues 318-332 (KERDSRKDIEHDRST) show a composition bias toward basic and acidic residues. Positions 407 to 1055 (PRGILNLIES…VMCRSVTEIS (649 aa)) are NSE5-like domain; mediates interaction with SLF2. 3 ANK repeats span residues 804 to 834 (KGETALHRACINNQVDRLILLLSMPGIDINV), 838 to 867 (AGWTPLHEACNYGNTVCVQEILQRCPEVDL), and 872 to 901 (DGVTPLHDALSNGHVEIGKLLLQHGGPVLL). Lysine 929 participates in a covalent cross-link: Glycyl lysine isopeptide (Lys-Gly) (interchain with G-Cter in SUMO2).

As to quaternary structure, interacts (via N-terminus) with SLF2; this interaction links RAD18 to the SMC5-SMC6 complex. Interacts (via BRCT domains) with RAD18; this interaction occurs in a SLF2-independent manner. Interacts with SMC6. Interacts (via BRCT domains) with RAD18 (via C-terminus and phosphorylated form); this interaction is required for efficient repair of UV-induced DNA damage.

Its subcellular location is the nucleus. It localises to the cytoplasm. The protein resides in the cytoskeleton. It is found in the microtubule organizing center. The protein localises to the centrosome. Plays a role in the DNA damage response (DDR) pathway by regulating postreplication repair of UV-damaged DNA and genomic stability maintenance. The SLF1-SLF2 complex acts to link RAD18 with the SMC5-SMC6 complex at replication-coupled interstrand cross-links (ICL) and DNA double-strand breaks (DSBs) sites on chromatin during DNA repair in response to stalled replication forks. Promotes the recruitment of SLF2 and the SMC5-SMC6 complex to DNA lesions. This is SMC5-SMC6 complex localization factor protein 1 from Bos taurus (Bovine).